A 224-amino-acid polypeptide reads, in one-letter code: Transcription factor HEC3 (224 aa).

Disordered regions lie at residues 22–42 (SSNN…DPIG) and 68–88 (SLTT…EEEP). Residues 28–37 (KNDDHHHQHN) are compositionally biased toward basic and acidic residues. Over residues 68–77 (SLTTTTLLSG) the composition is skewed to low complexity. Over residues 78-88 (DQEDDEDEEEP) the composition is skewed to acidic residues. A bHLH domain is found at 125–174 (ISDDPQSVAARHRRERISERIRILQRLVPGGTKMDTASMLDEAIRYVKFL). The interval 183-224 (NNTGYTPPPPQDQASQAVTTSWVSPPPPPSFGRGGRGVGELI) is disordered. The span at 194–204 (DQASQAVTTSW) shows a compositional bias: polar residues. The segment covering 214–224 (GRGGRGVGELI) has biased composition (gly residues).

Homodimer. Interacts with SPT. Gynoecium.

It localises to the nucleus. Its function is as follows. Required for the female reproductive tract development and fertility. The chain is Transcription factor HEC3 (HEC3) from Arabidopsis thaliana (Mouse-ear cress).